A 162-amino-acid polypeptide reads, in one-letter code: Mitochondrial intermembrane space import and assembly protein 40 homolog (162 aa).

A disordered region spans residues 1–61 (MGQAQSDENS…DNENESLEAK (61 aa)). Residues 9–18 (NSIPTTTTTN) are compositionally biased toward low complexity. 3 disulfide bridges follow: cysteine 68–cysteine 70, cysteine 79–cysteine 112, and cysteine 89–cysteine 102. In terms of domain architecture, CHCH spans 76-120 (NGSCGSQFSEAFLCFLKSTAEEKGSDCVNPFVALQSCINANPDAF). 2 consecutive short sequence motifs (cx9C motif) follow at residues 79–89 (CGSQFSEAFLC) and 102–112 (CVNPFVALQSC). Residues 119 to 162 (AFSKSVTGDEKETEKKEEQPPVQDHRIIPPLWAKDPPRSGNSKL) form a disordered region. Residues 125–145 (TGDEKETEKKEEQPPVQDHRI) are compositionally biased toward basic and acidic residues.

The protein localises to the mitochondrion intermembrane space. It localises to the peroxisome matrix. In terms of biological role, required for the import and folding of small cysteine-containing proteins in the mitochondrial intermembrane space. Involved in the mitochondrial oxidative folding of the copper-zinc superoxide dismutase CSD1, the copper chaperone for superoxide dismutase CCS, and subunits of the mitochondrial membrane respiratory chain NADH dehydrogenase (Complex I). Involved in the peroxisomal oxidative folding of the copper-zinc superoxide dismutase CSD3, and the fatty acid beta-oxidation multifunctional protein AIM1. The polypeptide is Mitochondrial intermembrane space import and assembly protein 40 homolog (Arabidopsis thaliana (Mouse-ear cress)).